Here is a 452-residue protein sequence, read N- to C-terminus: Netrin-5 (452 aa).

The N-terminal stretch at 1-34 is a signal peptide; it reads MTDYRTLFSSPGAGSTVTTPITLSLLLLLSQATS. Disulfide bonds link Cys173/Cys182, Cys175/Cys191, Cys193/Cys202, Cys205/Cys225, Cys228/Cys240, Cys230/Cys247, Cys249/Cys258, Cys261/Cys275, Cys298/Cys376, Cys302/Cys378, and Cys317/Cys438. 2 Laminin EGF-like domains span residues 173–227 and 228–277; these read CQCH…PCLP and CQCH…PCQR. In terms of domain architecture, NTR spans 298–438; that stretch reads CQGYCNVSVS…LQQKERGGAC (141 aa). N-linked (GlcNAc...) asparagine glycosylation occurs at Asn303.

Its subcellular location is the secreted. Its function is as follows. Plays a role in neurogenesis. Prevents motor neuron cell body migration out of the neural tube. This Mus musculus (Mouse) protein is Netrin-5 (Ntn5).